Here is a 305-residue protein sequence, read N- to C-terminus: D-alanine--D-alanine ligase (305 aa).

The 193-residue stretch at 107 to 299 folds into the ATP-grasp domain; it reads KKMLCYHGIA…FDELVERILA (193 aa). 134 to 186 provides a ligand contact to ATP; that stretch reads PDYPLVVKPAREGSTIGISIVHDEQELAAGLEEAFRHDDLVLVEQFIAGAEVT. Residues Asp254, Glu266, and Asn268 each coordinate Mg(2+).

Belongs to the D-alanine--D-alanine ligase family. The cofactor is Mg(2+). Mn(2+) is required as a cofactor.

The protein resides in the cytoplasm. The catalysed reaction is 2 D-alanine + ATP = D-alanyl-D-alanine + ADP + phosphate + H(+). Its pathway is cell wall biogenesis; peptidoglycan biosynthesis. Functionally, cell wall formation. This is D-alanine--D-alanine ligase from Syntrophotalea carbinolica (strain DSM 2380 / NBRC 103641 / GraBd1) (Pelobacter carbinolicus).